We begin with the raw amino-acid sequence, 484 residues long: Maintenance of mitochondrial morphology protein 1 (484 aa).

Topologically, residues 1-22 (MSFQQSETVPVPAQSSLSFTQG) are lumenal. The chain crosses the membrane as a helical span at residues 23-43 (FLLGQLSVVLLIGAFIKFFIF). At 44 to 484 (GEAPPPPSRG…PGSLSGAAAR (441 aa)) the chain is on the cytoplasmic side. Disordered stretches follow at residues 50–98 (PSRG…SSST), 272–319 (STPP…TGSP), and 388–484 (RTGV…AAAR). Basic residues predominate over residues 54-64 (LSHRASTHRRS). 2 stretches are compositionally biased toward polar residues: residues 65-78 (NSIY…ANNR) and 85-98 (SNSN…SSST). Residues 130–380 (QPESLDWFNV…EPRVQVVGLP (251 aa)) form the SMP-LTD domain. A compositionally biased stretch (pro residues) spans 272 to 286 (STPPLHTPSPSPSPP). Positions 399-408 (TGSNAASRSA) are enriched in polar residues. Basic and acidic residues predominate over residues 413-427 (LGDHHLGDREPEGLR). Polar residues-rich tracts occupy residues 437-449 (QFDS…SYNV) and 466-476 (GALSEQFQMPG).

The protein belongs to the MMM1 family. In terms of assembly, homodimer. Component of the ER-mitochondria encounter structure (ERMES) or MDM complex, composed of mmm1, mdm10, mdm12 and mdm34. A mmm1 homodimer associates with one molecule of mdm12 on each side in a pairwise head-to-tail manner, and the SMP-LTD domains of mmm1 and mdm12 generate a continuous hydrophobic tunnel for phospholipid trafficking.

It localises to the endoplasmic reticulum membrane. Its function is as follows. Component of the ERMES/MDM complex, which serves as a molecular tether to connect the endoplasmic reticulum (ER) and mitochondria. Components of this complex are involved in the control of mitochondrial shape and protein biogenesis, and function in nonvesicular lipid trafficking between the ER and mitochondria. The mdm12-mmm1 subcomplex functions in the major beta-barrel assembly pathway that is responsible for biogenesis of all outer membrane beta-barrel proteins, and acts in a late step after the SAM complex. The mdm10-mdm12-mmm1 subcomplex further acts in the TOM40-specific pathway after the action of the mdm12-mmm1 complex. Essential for establishing and maintaining the structure of mitochondria and maintenance of mtDNA nucleoids. In Aspergillus niger (strain ATCC MYA-4892 / CBS 513.88 / FGSC A1513), this protein is Maintenance of mitochondrial morphology protein 1.